Reading from the N-terminus, the 420-residue chain is Methylaspartate ammonia-lyase 1 (420 aa).

Residue glutamine 173 coordinates (2S,3S)-3-methyl-L-aspartate. Mg(2+) contacts are provided by aspartate 237, glutamate 272, and aspartate 306. (2S,3S)-3-methyl-L-aspartate is bound at residue glutamine 328. Residue lysine 330 is the Proton acceptor of the active site. 359-360 (SC) serves as a coordination point for (2S,3S)-3-methyl-L-aspartate.

Homodimer. The cofactor is Mg(2+).

It catalyses the reaction (2S,3S)-3-methyl-L-aspartate = mesaconate + NH4(+). The protein operates within amino-acid degradation; L-glutamate degradation via mesaconate pathway; acetate and pyruvate from L-glutamate: step 2/4. In terms of biological role, involved in the methylaspartate cycle. Catalyzes the formation of the alpha,beta-unsaturated bond by the reversible anti elimination of ammonia from L-threo-beta-methylaspartate (L-threo-(2S,3S)-3-methylaspartate) to give mesaconate. It can also catalyze the amination of fumarate and ethylfumarate, and the deamination of hydroxylamine, hydrazine, methylamine and ethylamine. This is Methylaspartate ammonia-lyase 1 from Carboxydothermus hydrogenoformans (strain ATCC BAA-161 / DSM 6008 / Z-2901).